The chain runs to 232 residues: Leucyl/phenylalanyl-tRNA--protein transferase (232 aa).

The protein belongs to the L/F-transferase family.

It localises to the cytoplasm. The enzyme catalyses N-terminal L-lysyl-[protein] + L-leucyl-tRNA(Leu) = N-terminal L-leucyl-L-lysyl-[protein] + tRNA(Leu) + H(+). It carries out the reaction N-terminal L-arginyl-[protein] + L-leucyl-tRNA(Leu) = N-terminal L-leucyl-L-arginyl-[protein] + tRNA(Leu) + H(+). The catalysed reaction is L-phenylalanyl-tRNA(Phe) + an N-terminal L-alpha-aminoacyl-[protein] = an N-terminal L-phenylalanyl-L-alpha-aminoacyl-[protein] + tRNA(Phe). Functions in the N-end rule pathway of protein degradation where it conjugates Leu, Phe and, less efficiently, Met from aminoacyl-tRNAs to the N-termini of proteins containing an N-terminal arginine or lysine. This chain is Leucyl/phenylalanyl-tRNA--protein transferase, found in Nitrosospira multiformis (strain ATCC 25196 / NCIMB 11849 / C 71).